Consider the following 264-residue polypeptide: Apolipoprotein A-I (264 aa).

The first 18 residues, 1 to 18 (MKAVVLAVAVLFLTGSQA), serve as a signal peptide directing secretion. Repeat copies occupy residues 67 to 88 (LNLLENWDTFGSTFGRLQEQLG) and 89 to 110 (PVTREFWDSLEKDTDWLRQEMN). Residues 67–264 (LNLLENWDTF…DEATQKLNTQ (198 aa)) are 10 X approximate tandem repeats. The residue at position 109 (methionine 109) is a Methionine sulfoxide. One copy of the 3; half-length repeat lies at 111-121 (KDLEEVKQKVQ). A run of 3 repeats spans residues 122–143 (PYLDEFQKKWEEEVERYRPKVE), 144–165 (PLGAQLREGARQKLEELQKQLV), and 166–187 (PLGEDLRDRARLHVDALRTKLA). One copy of the 7; truncated repeat lies at 188-207 (PYSDQMRDRLAERLTALRDN). Residue methionine 193 is modified to Methionine sulfoxide. The stretch at 208–229 (PKLAEYHARATEHLKKLGEKTK) is repeat 8. One copy of the 9; half-length repeat lies at 230-240 (PTLEDLRQGLM). Methionine 240 is subject to Methionine sulfoxide. Copy 10 of the repeat occupies 241 to 264 (PWLESLKAKALSVLDEATQKLNTQ).

The protein belongs to the apolipoprotein A1/A4/E family. As to quaternary structure, homodimer. Interacts with APOA1BP and CLU. Component of a sperm activating protein complex (SPAP), consisting of APOA1, an immunoglobulin heavy chain, an immunoglobulin light chain and albumin. Interacts with NDRG1. Interacts with SCGB3A2. Interacts with NAXE and YJEFN3. In terms of processing, glycosylated. Post-translationally, palmitoylated. Phosphorylation sites are present in the extracellular medium.

Its subcellular location is the secreted. Its function is as follows. Participates in the reverse transport of cholesterol from tissues to the liver for excretion by promoting cholesterol efflux from tissues and by acting as a cofactor for the lecithin cholesterol acyltransferase (LCAT). As part of the SPAP complex, activates spermatozoa motility. This chain is Apolipoprotein A-I (Apoa1), found in Nannospalax galili (Northern Israeli blind subterranean mole rat).